The primary structure comprises 562 residues: Arginine--tRNA ligase (562 aa).

The 'HIGH' region signature appears at 129 to 139 (ANPTGPLHVGH).

It belongs to the class-I aminoacyl-tRNA synthetase family. In terms of assembly, monomer.

It localises to the cytoplasm. It carries out the reaction tRNA(Arg) + L-arginine + ATP = L-arginyl-tRNA(Arg) + AMP + diphosphate. The sequence is that of Arginine--tRNA ligase from Xanthomonas axonopodis pv. citri (strain 306).